The sequence spans 215 residues: uncharacterized protein (215 aa).

This is an uncharacterized protein from Acanthamoeba polyphaga mimivirus (APMV).